Here is a 276-residue protein sequence, read N- to C-terminus: NADPH-dependent 7-cyano-7-deazaguanine reductase (276 aa).

83–85 serves as a coordination point for substrate; the sequence is IES. An NADPH-binding site is contributed by 85 to 86; the sequence is SK. Cys184 (thioimide intermediate) is an active-site residue. The Proton donor role is filled by Asp191. 223 to 224 contributes to the substrate binding site; sequence HE. 252–253 is an NADPH binding site; sequence RG.

The protein belongs to the GTP cyclohydrolase I family. QueF type 2 subfamily. In terms of assembly, homodimer.

The protein localises to the cytoplasm. It catalyses the reaction 7-aminomethyl-7-carbaguanine + 2 NADP(+) = 7-cyano-7-deazaguanine + 2 NADPH + 3 H(+). It participates in tRNA modification; tRNA-queuosine biosynthesis. In terms of biological role, catalyzes the NADPH-dependent reduction of 7-cyano-7-deazaguanine (preQ0) to 7-aminomethyl-7-deazaguanine (preQ1). This Desulfotalea psychrophila (strain LSv54 / DSM 12343) protein is NADPH-dependent 7-cyano-7-deazaguanine reductase.